A 284-amino-acid polypeptide reads, in one-letter code: Mediator of RNA polymerase II transcription subunit 4 (284 aa).

An N-acetylserine modification is found at Ser2. Residues 205 to 284 (RIPGEEVEET…DLDLFDPDDF (80 aa)) form a disordered region. Residues 225-238 (EEQKGQMAKKEGTP) are compositionally biased toward basic and acidic residues. Thr237 is modified (phosphothreonine; by KIN28). Ser242 carries the phosphoserine modification. A compositionally biased stretch (basic and acidic residues) spans 248–265 (TAKEVGDEADNTKDKEKE). The segment covering 266–284 (ENNDDALDLDLDLFDPDDF) has biased composition (acidic residues).

The protein belongs to the Mediator complex subunit 4 family. As to quaternary structure, component of the Mediator complex, which is composed of at least 21 subunits that form three structurally distinct submodules. The Mediator head module contains MED6, MED8, MED11, SRB4/MED17, SRB5/MED18, ROX3/MED19, SRB2/MED20 and SRB6/MED22, the middle module contains MED1, MED4, NUT1/MED5, MED7, CSE2/MED9, NUT2/MED10, SRB7/MED21 and SOH1/MED31, and the tail module contains MED2, PGD1/MED3, RGR1/MED14, GAL11/MED15 and SIN4/MED16. The head and the middle modules interact directly with RNA polymerase II, whereas the elongated tail module interacts with gene-specific regulatory proteins. MED4 interacts directly with MED1, MED7 and SRB7/MED21.

It localises to the nucleus. In terms of biological role, component of the Mediator complex, a coactivator involved in the regulated transcription of nearly all RNA polymerase II-dependent genes. Mediator functions as a bridge to convey information from gene-specific regulatory proteins to the basal RNA polymerase II transcription machinery. The Mediator complex, having a compact conformation in its free form, is recruited to promoters by direct interactions with regulatory proteins and serves for the assembly of a functional preinitiation complex with RNA polymerase II and the general transcription factors. The Mediator complex unfolds to an extended conformation and partially surrounds RNA polymerase II, specifically interacting with the unphosphorylated form of the C-terminal domain (CTD) of RNA polymerase II. The Mediator complex dissociates from the RNA polymerase II holoenzyme and stays at the promoter when transcriptional elongation begins. The chain is Mediator of RNA polymerase II transcription subunit 4 (MED4) from Saccharomyces cerevisiae (strain ATCC 204508 / S288c) (Baker's yeast).